Reading from the N-terminus, the 79-residue chain is Conotoxin Leo-O1 (79 aa).

The signal sequence occupies residues 1–22 (MKLTCMMLVAVLFLTAWTFVTA). Positions 23–51 (NVSRNGLENLFPEERHEMMNPEAAKLNNR) are excised as a propeptide. 3 disulfides stabilise this stretch: cysteine 53–cysteine 70, cysteine 60–cysteine 74, and cysteine 69–cysteine 78.

It belongs to the conotoxin O1 superfamily. As to expression, expressed by the venom duct.

It localises to the secreted. This is Conotoxin Leo-O1 from Conus leopardus (Leopard cone).